The chain runs to 162 residues: Anthrone oxygenase nsrD (162 aa).

Transmembrane regions (helical) follow at residues 17-37, 54-74, and 86-106; these read FLSG…LDTI, GSIY…YVAL, and PYVL…WVMV. The N-linked (GlcNAc...) asparagine glycan is linked to N109. Residues 130-150 form a helical membrane-spanning segment; sequence LVVKWAWLHVVRSLYPLFGAF.

Belongs to the anthrone oxygenase family.

The protein localises to the membrane. The catalysed reaction is emodin anthrone + O2 = emodin + H2O + H(+). The protein operates within secondary metabolite biosynthesis. Its function is as follows. Anthrone oxygenase; part of the gene cluster that mediates the biosynthesis of the tetrahydroxanthone dimer neosartorin, which exhibits antibacterial activity. The two different monomeric units appear to be synthesized by the same set of enzymes, among which the Baeyer-Villiger monooxygenase nsrF is the key enzyme for the divergence of the biosynthetic routes. The pathway begins with the synthesis of atrochrysone thioester by the polyketide synthase nsrB. The atrochrysone carboxyl ACP thioesterase nsrC then breaks the thioester bond and releases the atrochrysone carboxylic acid from AacuL. Atrochrysone carboxylic acid is decarboxylated by the decarboxylase nsrE, and oxidized by the anthrone oxygenase nsrD to yield emodin. Emodin is then reduced to emodin hydroquinone by the oxidoreductase nsrR. A-ring reduction by the short chain dehydrogenase nsrJ, dehydration by the scytalone dehydratase-like protein nsrI and probable spontaneous re-oxidation, results in overall deoxygenation to chrysophanol. The Baeyer-Villiger monooxygenase nsrF accepts chrysophanol as a substrate to insert one oxygen atom at two different positions to yield the precursors of both monomric units. NsrF is promiscuous/flexible in interacting with the 2 (non methylated and methylated) aromatic rings of chrysophanol, thus diverging the biosynthetic pathway at this point. After the hydrolysis of the lactones, methylesterification by the methyltransferase nsrG yields respectively moniliphenone and 2,2',6'-trihydroxy-4-methyl-6-methoxya-cyldiphenylmethanone. The next steps are the hydroxylation by the FAD-dependent monooxygenase nsrK, followed by isomerization by the monooxygenase nsrQ. The short chain dehydrogenase/reductase nsrO then catalyzes the C-5 ketoreduction to give the xanthone skeleton of blennolide C and 5-acetylblennolide A. The acetyltransferase nsrL has a strict substrate specificity and uses only blennolide A but not blennolide C to yield 5-acetylblennolide A as the single-acetylated product. In the final step of the biosynthesis, the heterodimerization of the 2 xanthones, blennolide C and 5-acetylblennolide A, is catalyzed by the cytochrome P450 monooxygenase nsrP. NsrP can utilize at least three different xanthones as its substrates to perform the dimerization reaction. This Aspergillus novofumigatus (strain IBT 16806) protein is Anthrone oxygenase nsrD.